Here is a 757-residue protein sequence, read N- to C-terminus: 5-methyltetrahydropteroyltriglutamate--homocysteine methyltransferase (757 aa).

Residues 15–18 (RELK) and lysine 114 each bind 5-methyltetrahydropteroyltri-L-glutamate. L-homocysteine contacts are provided by residues 428 to 430 (IGS) and glutamate 481. L-methionine is bound by residues 428–430 (IGS) and glutamate 481. 5-methyltetrahydropteroyltri-L-glutamate-binding positions include 512–513 (RC) and tryptophan 558. An L-homocysteine-binding site is contributed by aspartate 596. Position 596 (aspartate 596) interacts with L-methionine. Residue glutamate 602 coordinates 5-methyltetrahydropteroyltri-L-glutamate. 3 residues coordinate Zn(2+): histidine 639, cysteine 641, and glutamate 663. The active-site Proton donor is the histidine 692. Cysteine 724 serves as a coordination point for Zn(2+).

The protein belongs to the vitamin-B12 independent methionine synthase family. Requires Zn(2+) as cofactor.

It carries out the reaction 5-methyltetrahydropteroyltri-L-glutamate + L-homocysteine = tetrahydropteroyltri-L-glutamate + L-methionine. Its pathway is amino-acid biosynthesis; L-methionine biosynthesis via de novo pathway; L-methionine from L-homocysteine (MetE route): step 1/1. Functionally, catalyzes the transfer of a methyl group from 5-methyltetrahydrofolate to homocysteine resulting in methionine formation. The polypeptide is 5-methyltetrahydropteroyltriglutamate--homocysteine methyltransferase (Lactococcus lactis subsp. cremoris (strain SK11)).